A 294-amino-acid chain; its full sequence is Cytidine deaminase (294 aa).

CMP/dCMP-type deaminase domains follow at residues Asp-48–Lys-168 and Leu-186–Gly-294. A substrate-binding site is contributed by Asn-89–Glu-91. His-102 is a binding site for Zn(2+). Glu-104 serves as the catalytic Proton donor. The Zn(2+) site is built by Cys-129 and Cys-132.

It belongs to the cytidine and deoxycytidylate deaminase family. Homodimer. Requires Zn(2+) as cofactor.

It catalyses the reaction cytidine + H2O + H(+) = uridine + NH4(+). The enzyme catalyses 2'-deoxycytidine + H2O + H(+) = 2'-deoxyuridine + NH4(+). In terms of biological role, this enzyme scavenges exogenous and endogenous cytidine and 2'-deoxycytidine for UMP synthesis. The chain is Cytidine deaminase from Salmonella paratyphi A (strain ATCC 9150 / SARB42).